The chain runs to 156 residues: Ribosomal RNA large subunit methyltransferase H (156 aa).

S-adenosyl-L-methionine is bound by residues Leu73, Gly104, and 123–128; that span reads ISSMTL.

Belongs to the RNA methyltransferase RlmH family. In terms of assembly, homodimer.

The protein localises to the cytoplasm. The enzyme catalyses pseudouridine(1915) in 23S rRNA + S-adenosyl-L-methionine = N(3)-methylpseudouridine(1915) in 23S rRNA + S-adenosyl-L-homocysteine + H(+). Its function is as follows. Specifically methylates the pseudouridine at position 1915 (m3Psi1915) in 23S rRNA. This is Ribosomal RNA large subunit methyltransferase H from Burkholderia ambifaria (strain ATCC BAA-244 / DSM 16087 / CCUG 44356 / LMG 19182 / AMMD) (Burkholderia cepacia (strain AMMD)).